The following is a 366-amino-acid chain: Pyrimidine monooxygenase RutA (366 aa).

FMN is bound by residues 49–50, Asn-115, Glu-124, 140–141, and Ser-190; these read IK and RY.

This sequence belongs to the NtaA/SnaA/DszA monooxygenase family. RutA subfamily.

The enzyme catalyses uracil + FMNH2 + NADH + O2 = (Z)-3-ureidoacrylate + FMN + NAD(+) + H2O + H(+). The catalysed reaction is thymine + FMNH2 + NADH + O2 = (Z)-2-methylureidoacrylate + FMN + NAD(+) + H2O + H(+). Catalyzes the pyrimidine ring opening between N-3 and C-4 by an unusual flavin hydroperoxide-catalyzed mechanism, adding oxygen atoms in the process to yield ureidoacrylate peracid, that immediately reacts with FMN forming ureidoacrylate and FMN-N(5)-oxide. The FMN-N(5)-oxide reacts spontaneously with NADH to produce FMN. Requires the flavin reductase RutF to regenerate FMN in vivo. The protein is Pyrimidine monooxygenase RutA of Serratia proteamaculans (strain 568).